The sequence spans 228 residues: DNA mismatch repair protein MutH (228 aa).

The protein belongs to the MutH family.

It is found in the cytoplasm. Its function is as follows. Sequence-specific endonuclease that cleaves unmethylated GATC sequences. It is involved in DNA mismatch repair. The chain is DNA mismatch repair protein MutH from Photorhabdus laumondii subsp. laumondii (strain DSM 15139 / CIP 105565 / TT01) (Photorhabdus luminescens subsp. laumondii).